A 166-amino-acid polypeptide reads, in one-letter code: Large ribosomal subunit protein uL10 (166 aa).

Belongs to the universal ribosomal protein uL10 family. Part of the ribosomal stalk of the 50S ribosomal subunit. The N-terminus interacts with L11 and the large rRNA to form the base of the stalk. The C-terminus forms an elongated spine to which L12 dimers bind in a sequential fashion forming a multimeric L10(L12)X complex.

In terms of biological role, forms part of the ribosomal stalk, playing a central role in the interaction of the ribosome with GTP-bound translation factors. The sequence is that of Large ribosomal subunit protein uL10 from Ureaplasma parvum serovar 3 (strain ATCC 27815 / 27 / NCTC 11736).